We begin with the raw amino-acid sequence, 709 residues long: Twinkle homolog protein, chloroplastic/mitochondrial (709 aa).

A chloroplast and mitochondrion-targeting transit peptide spans 1 to 16 (MRFLLRLPQIHFRKLS). A Toprim domain is found at 280 to 385 (SEVIIVEGEI…KKSEDEHFKD (106 aa)). Mg(2+) is bound by residues Glu-286, Asp-348, and Asp-350. One can recognise an SF4 helicase domain in the interval 430–698 (THGHEYGVST…GSYSDSPVTP (269 aa)). 460 to 467 (GIPNSGKS) serves as a coordination point for ATP.

Requires Mg(2+) as cofactor. Expressed in young leaves and shoot apex tissues. Detected in developing tissues such as cotyledons, sepals, pistils and inflorescences. Nearly undetectable in mature leaves.

Its subcellular location is the plastid. The protein resides in the chloroplast. The protein localises to the mitochondrion. The enzyme catalyses ATP + H2O = ADP + phosphate + H(+). Its function is as follows. Has both DNA primase and DNA helicase activities and may be involved in organelle DNA replication. Capable of producing RNA primers of 9 to 18 bases from a single-stranded DNA template. This is Twinkle homolog protein, chloroplastic/mitochondrial from Arabidopsis thaliana (Mouse-ear cress).